Here is a 142-residue protein sequence, read N- to C-terminus: Large ribosomal subunit protein uL13 (142 aa).

It belongs to the universal ribosomal protein uL13 family. In terms of assembly, part of the 50S ribosomal subunit.

Functionally, this protein is one of the early assembly proteins of the 50S ribosomal subunit, although it is not seen to bind rRNA by itself. It is important during the early stages of 50S assembly. The protein is Large ribosomal subunit protein uL13 of Actinobacillus succinogenes (strain ATCC 55618 / DSM 22257 / CCUG 43843 / 130Z).